The following is a 415-amino-acid chain: DNA polymerase IV (415 aa).

One can recognise a UmuC domain in the interval 15–196 (ILHVDMNCFF…LPVGAMHGIG (182 aa)). Mg(2+) contacts are provided by D19 and D115. The active site involves E116. Residues 238–260 (KGMDDRQVDPSQMGQHKSVGNSM) are disordered. Residues 246-260 (DPSQMGQHKSVGNSM) are compositionally biased toward polar residues.

Belongs to the DNA polymerase type-Y family. As to quaternary structure, monomer. It depends on Mg(2+) as a cofactor.

It is found in the cytoplasm. The enzyme catalyses DNA(n) + a 2'-deoxyribonucleoside 5'-triphosphate = DNA(n+1) + diphosphate. In terms of biological role, poorly processive, error-prone DNA polymerase involved in untargeted mutagenesis. Copies undamaged DNA at stalled replication forks, which arise in vivo from mismatched or misaligned primer ends. These misaligned primers can be extended by PolIV. Exhibits no 3'-5' exonuclease (proofreading) activity. May be involved in translesional synthesis, in conjunction with the beta clamp from PolIII. This Bacillus cereus (strain ZK / E33L) protein is DNA polymerase IV.